Reading from the N-terminus, the 196-residue chain is GTP cyclohydrolase 1 (196 aa).

Zn(2+) is bound by residues C84, H87, and C157.

Belongs to the GTP cyclohydrolase I family. Toroid-shaped homodecamer, composed of two pentamers of five dimers.

It carries out the reaction GTP + H2O = 7,8-dihydroneopterin 3'-triphosphate + formate + H(+). It functions in the pathway cofactor biosynthesis; 7,8-dihydroneopterin triphosphate biosynthesis; 7,8-dihydroneopterin triphosphate from GTP: step 1/1. The protein is GTP cyclohydrolase 1 of Corynebacterium glutamicum (strain ATCC 13032 / DSM 20300 / JCM 1318 / BCRC 11384 / CCUG 27702 / LMG 3730 / NBRC 12168 / NCIMB 10025 / NRRL B-2784 / 534).